The chain runs to 463 residues: Cysteine--tRNA ligase (463 aa).

Position 30 (C30) interacts with Zn(2+). The short motif at 32-42 (MTVYDYCHVGH) is the 'HIGH' region element. Zn(2+) is bound by residues C214, H239, and E243. The 'KMSKS' region signature appears at 271-275 (KMSKS). K274 contacts ATP.

It belongs to the class-I aminoacyl-tRNA synthetase family. As to quaternary structure, monomer. The cofactor is Zn(2+).

The protein localises to the cytoplasm. It catalyses the reaction tRNA(Cys) + L-cysteine + ATP = L-cysteinyl-tRNA(Cys) + AMP + diphosphate. The chain is Cysteine--tRNA ligase from Ralstonia pickettii (strain 12J).